A 57-amino-acid polypeptide reads, in one-letter code: MAETRVRKNESIDAALRRFKRSLSKEGTLAEVRKRKHYEKPSVRRKKKSEAARKRKF.

The tract at residues 31-57 (EVRKRKHYEKPSVRRKKKSEAARKRKF) is disordered. Basic residues predominate over residues 33 to 57 (RKRKHYEKPSVRRKKKSEAARKRKF).

The protein belongs to the bacterial ribosomal protein bS21 family.

The protein is Small ribosomal subunit protein bS21 (rpsU) of Halalkalibacterium halodurans (strain ATCC BAA-125 / DSM 18197 / FERM 7344 / JCM 9153 / C-125) (Bacillus halodurans).